The following is a 365-amino-acid chain: Methylthioribose-1-phosphate isomerase (365 aa).

Residue aspartate 249 is the Proton donor of the active site.

Belongs to the eIF-2B alpha/beta/delta subunits family. MtnA subfamily.

It is found in the cytoplasm. It localises to the nucleus. The catalysed reaction is 5-(methylsulfanyl)-alpha-D-ribose 1-phosphate = 5-(methylsulfanyl)-D-ribulose 1-phosphate. Its pathway is amino-acid biosynthesis; L-methionine biosynthesis via salvage pathway; L-methionine from S-methyl-5-thio-alpha-D-ribose 1-phosphate: step 1/6. Functionally, catalyzes the interconversion of methylthioribose-1-phosphate (MTR-1-P) into methylthioribulose-1-phosphate (MTRu-1-P). The protein is Methylthioribose-1-phosphate isomerase of Ostreococcus lucimarinus (strain CCE9901).